A 286-amino-acid chain; its full sequence is Elongation factor Ts (286 aa).

Residues 82-85 (TDFV) are involved in Mg(2+) ion dislocation from EF-Tu.

Belongs to the EF-Ts family.

The protein localises to the cytoplasm. Functionally, associates with the EF-Tu.GDP complex and induces the exchange of GDP to GTP. It remains bound to the aminoacyl-tRNA.EF-Tu.GTP complex up to the GTP hydrolysis stage on the ribosome. This Desulfovibrio desulfuricans (strain ATCC 27774 / DSM 6949 / MB) protein is Elongation factor Ts.